A 183-amino-acid chain; its full sequence is UPF0397 protein EF_2154 (183 aa).

Transmembrane regions (helical) follow at residues 10–30 (IVAIGIGSAVFVILGRFVVIP), 44–64 (FLALMSVVFGPVAGGLIGLIG), 74–94 (GSAWWSWIICSGIIGIIFGFA), 115–135 (IFQAFGNIVVWGLIAPSLDIL), and 147–167 (QGVFATVSNIVAVGIIGTLLM).

The protein belongs to the UPF0397 family.

It is found in the cell membrane. The polypeptide is UPF0397 protein EF_2154 (Enterococcus faecalis (strain ATCC 700802 / V583)).